The following is a 105-amino-acid chain: Flagellar transcriptional regulator FlhD (105 aa).

The protein belongs to the FlhD family. In terms of assembly, homodimer; disulfide-linked. Forms a heterohexamer composed of two FlhC and four FlhD subunits. Each FlhC binds a FlhD dimer, forming a heterotrimer, and a hexamer assembles by dimerization of two heterotrimers.

The protein resides in the cytoplasm. Functions in complex with FlhC as a master transcriptional regulator that regulates transcription of several flagellar and non-flagellar operons by binding to their promoter region. Activates expression of class 2 flagellar genes, including fliA, which is a flagellum-specific sigma factor that turns on the class 3 genes. Also regulates genes whose products function in a variety of physiological pathways. The polypeptide is Flagellar transcriptional regulator FlhD (Ralstonia nicotianae (strain ATCC BAA-1114 / GMI1000) (Ralstonia solanacearum)).